A 364-amino-acid chain; its full sequence is Probable dual-specificity RNA methyltransferase RlmN (364 aa).

Residue E107 is the Proton acceptor of the active site. The region spanning 113–346 is the Radical SAM core domain; that stretch reads HDYGNSVCVT…ATIRREQGSD (234 aa). C120 and C351 are joined by a disulfide. C127, C131, and C134 together coordinate [4Fe-4S] cluster. S-adenosyl-L-methionine-binding positions include 177-178, S209, 232-234, and N308; these read GE and SLH. The S-methylcysteine intermediate role is filled by C351.

Belongs to the radical SAM superfamily. RlmN family. The cofactor is [4Fe-4S] cluster.

The protein localises to the cytoplasm. The enzyme catalyses adenosine(2503) in 23S rRNA + 2 reduced [2Fe-2S]-[ferredoxin] + 2 S-adenosyl-L-methionine = 2-methyladenosine(2503) in 23S rRNA + 5'-deoxyadenosine + L-methionine + 2 oxidized [2Fe-2S]-[ferredoxin] + S-adenosyl-L-homocysteine. It carries out the reaction adenosine(37) in tRNA + 2 reduced [2Fe-2S]-[ferredoxin] + 2 S-adenosyl-L-methionine = 2-methyladenosine(37) in tRNA + 5'-deoxyadenosine + L-methionine + 2 oxidized [2Fe-2S]-[ferredoxin] + S-adenosyl-L-homocysteine. Functionally, specifically methylates position 2 of adenine 2503 in 23S rRNA and position 2 of adenine 37 in tRNAs. Confers resistance to some classes of antibiotics. The protein is Probable dual-specificity RNA methyltransferase RlmN of Staphylococcus haemolyticus (strain JCSC1435).